Reading from the N-terminus, the 1836-residue chain is MARPSLCTLVPLGPECLRPFTRESLAAIEQRAVEEEARLQRNKQMEIEEPERKPRSDLEAGKNLPMIYGDPPPEVIGIPLEDLDPYYSNKKTFIVLNKGKAIFRFSATPALYLLSPFSVVRRGAIKVLIHALFSMFIMITILTNCVFMTMSDPPPWSKNVEYTFTGIYTFESLIKILARGFCVDDFTFLRDPWNWLDFSVIMMAYLTEFVDLGNISALRTFRVLRALKTITVIPGLKTIVGALIQSVKKLSDVMILTVFCLSVFALVGLQLFMGNLRQKCVRWPPPFNDTNTTWYSNDTWYGNDTWYGNEMWYGNDSWYANDTWNSHASWATNDTFDWDAYISDEGNFYFLEGSNDALLCGNSSDAGHCPEGYECIKTGRNPNYGYTSYDTFSWAFLALFRLMTQDYWENLFQLTLRAAGKTYMIFFVVIIFLGSFYLINLILAVVAMAYAEQNEATLAEDKEKEEEFQQMLEKFKKHQEELEKAKAAQALEGGEADGDPAHGKDCNGSLDTSQGEKGAPRQSSSGDSGISDAMEELEEAHQKCPPWWYKCAHKVLIWNCCAPWLKFKNIIHLIVMDPFVDLGITICIVLNTLFMAMEHYPMTEHFDNVLTVGNLVFTGIFTAEMVLKLIAMDPYEYFQQGWNIFDSIIVTLSLVELGLANVQGLSVLRSFRLLRVFKLAKSWPTLNMLIKIIGNSVGALGNLTLVLAIIVFIFAVVGMQLFGKSYKECVCKIALDCNLPRWHMHDFFHSFLIVFRILCGEWIETMWDCMEVAGQAMCLTVFLMVMVIGNLVVLNLFLALLLSSFSADSLAASDEDGEMNNLQIAIGRIKLGIGFAKAFLLGLLHGKILSPKDIMLSLGEADGAGEAGEAGETAPEDEKKEPPEEDLKKDNHILNHMGLADGPPSSLELDHLNFINNPYLTIQVPIASEESDLEMPTEEETDTFSEPEDSKKPPQPLYDGNSSVCSTADYKPPEEDPEEQAEENPEGEQPEECFTEACVQRWPCLYVDISQGRGKKWWTLRRACFKIVEHNWFETFIVFMILLSSGALAFEDIYIEQRRVIRTILEYADKVFTYIFIMEMLLKWVAYGFKVYFTNAWCWLDFLIVDVSIISLVANWLGYSELGPIKSLRTLRALRPLRALSRFEGMRVVVNALLGAIPSIMNVLLVCLIFWLIFSIMGVNLFAGKFYYCINTTTSERFDISEVNNKSECESLMHTGQVRWLNVKVNYDNVGLGYLSLLQVATFKGWMDIMYAAVDSREKEEQPQYEVNLYMYLYFVIFIIFGSFFTLNLFIGVIIDNFNQQKKKLGGKDIFMTEEQKKYYNAMKKLGSKKPQKPIPRPQNKIQGMVYDLVTKQAFDITIMILICLNMVTMMVETDNQSQLKVDILYNINMIFIIIFTGECVLKMLALRQYYFTVGWNIFDFVVVILSIVGLALSDLIQKYFVSPTLFRVIRLARIGRVLRLIRGAKGIRTLLFALMMSLPALFNIGLLLFLVMFIYSIFGMSNFAYVKKESGIDDMFNFETFGNSIICLFEITTSAGWDGLLNPILNSGPPDCDPNLENPGTSVKGDCGNPSIGICFFCSYIIISFLIVVNMYIAIILENFNVATEESSEPLGEDDFEMFYETWEKFDPDATQFIAYSRLSDFVDTLQEPLRIAKPNKIKLITLDLPMVPGDKIHCLDILFALTKEVLGDSGEMDALKQTMEEKFMAANPSKVSYEPITTTLKRKHEEVCAIKIQRAYRRHLLQRSMKQASYMYRHSHDGSGDDAPEKEGLLANTMSKMYGHENGNSSSPSPEEKGEAGDAGPTMGLMPISPSDTAWPPAPPPGQTVRPGVKESLV.

Residues 1–131 (MARPSLCTLV…RGAIKVLIHA (131 aa)) are Cytoplasmic-facing. The segment covering 39–60 (LQRNKQMEIEEPERKPRSDLEA) has biased composition (basic and acidic residues). A disordered region spans residues 39 to 63 (LQRNKQMEIEEPERKPRSDLEAGKN). The stretch at 113-454 (LLSPFSVVRR…VVAMAYAEQN (342 aa)) is one I repeat. Residues 132-150 (LFSMFIMITILTNCVFMTM) form a helical membrane-spanning segment. At 151–157 (SDPPPWS) the chain is on the extracellular side. The helical transmembrane segment at 158-178 (KNVEYTFTGIYTFESLIKILA) threads the bilayer. The Cytoplasmic segment spans residues 179–192 (RGFCVDDFTFLRDP). The chain crosses the membrane as a helical span at residues 193 to 210 (WNWLDFSVIMMAYLTEFV). The Extracellular portion of the chain corresponds to 211–216 (DLGNIS). N-linked (GlcNAc...) asparagine glycosylation is present at Asn214. A helical membrane pass occupies residues 217–233 (ALRTFRVLRALKTITVI). Residues 234 to 252 (PGLKTIVGALIQSVKKLSD) lie on the Cytoplasmic side of the membrane. A helical membrane pass occupies residues 253-272 (VMILTVFCLSVFALVGLQLF). Topologically, residues 273-391 (MGNLRQKCVR…PNYGYTSYDT (119 aa)) are extracellular. Cysteines 280 and 360 form a disulfide. N-linked (GlcNAc...) asparagine glycosylation is found at Asn288, Asn291, Asn297, Asn303, Asn315, Asn321, Asn333, and Asn362. Cys369 and Cys375 are oxidised to a cystine. Residues 392-416 (FSWAFLALFRLMTQDYWENLFQLTL) constitute an intramembrane region (pore-forming). At 417 to 423 (RAAGKTY) the chain is on the extracellular side. The chain crosses the membrane as a helical span at residues 424 to 444 (MIFFVVIIFLGSFYLINLILA). Topologically, residues 445-578 (VVAMAYAEQN…NIIHLIVMDP (134 aa)) are cytoplasmic. The interval 493 to 530 (GGEADGDPAHGKDCNGSLDTSQGEKGAPRQSSSGDSGI) is disordered. Residues 509 to 528 (SLDTSQGEKGAPRQSSSGDS) show a composition bias toward polar residues. The stretch at 560–832 (CCAPWLKFKN…QIAIGRIKLG (273 aa)) is one II repeat. The helical transmembrane segment at 579–597 (FVDLGITICIVLNTLFMAM) threads the bilayer. At 598 to 608 (EHYPMTEHFDN) the chain is on the extracellular side. The helical transmembrane segment at 609–628 (VLTVGNLVFTGIFTAEMVLK) threads the bilayer. The Cytoplasmic segment spans residues 629–642 (LIAMDPYEYFQQGW). Residues 643–662 (NIFDSIIVTLSLVELGLANV) traverse the membrane as a helical segment. Residues 663–664 (QG) lie on the Extracellular side of the membrane. Residues 665-682 (LSVLRSFRLLRVFKLAKS) form a helical membrane-spanning segment. Residues 683-698 (WPTLNMLIKIIGNSVG) are Cytoplasmic-facing. The chain crosses the membrane as a helical span at residues 699–717 (ALGNLTLVLAIIVFIFAVV). Residues 718–746 (GMQLFGKSYKECVCKIALDCNLPRWHMHD) are Extracellular-facing. A disulfide bond links Cys731 and Cys737. Residues 747–767 (FFHSFLIVFRILCGEWIETMW) constitute an intramembrane region (pore-forming). Topologically, residues 768–778 (DCMEVAGQAMC) are extracellular. Cysteines 769 and 778 form a disulfide. The helical transmembrane segment at 779–797 (LTVFLMVMVIGNLVVLNLF) threads the bilayer. At 798–1032 (LALLLSSFSA…ACFKIVEHNW (235 aa)) the chain is on the cytoplasmic side. 2 disordered regions span residues 863-885 (GAGE…PPEE) and 930-992 (ESDL…QPEE). The span at 876-885 (EDEKKEPPEE) shows a compositional bias: basic and acidic residues. Composition is skewed to acidic residues over residues 930–947 (ESDL…FSEP) and 975–992 (EDPE…QPEE). Residues 1013–1326 (RGKKWWTLRR…KKYYNAMKKL (314 aa)) form an III repeat. Residues 1033 to 1050 (FETFIVFMILLSSGALAF) traverse the membrane as a helical segment. Residues 1051–1063 (EDIYIEQRRVIRT) lie on the Extracellular side of the membrane. A helical membrane pass occupies residues 1064-1082 (ILEYADKVFTYIFIMEMLL). The Cytoplasmic portion of the chain corresponds to 1083–1096 (KWVAYGFKVYFTNA). Residues 1097 to 1115 (WCWLDFLIVDVSIISLVAN) form a helical membrane-spanning segment. At 1116-1123 (WLGYSELG) the chain is on the extracellular side. The helical transmembrane segment at 1124–1142 (PIKSLRTLRALRPLRALSR) threads the bilayer. Topologically, residues 1143-1159 (FEGMRVVVNALLGAIPS) are cytoplasmic. The helical transmembrane segment at 1160–1179 (IMNVLLVCLIFWLIFSIMGV) threads the bilayer. Topologically, residues 1180 to 1230 (NLFAGKFYYCINTTTSERFDISEVNNKSECESLMHTGQVRWLNVKVNYDNV) are extracellular. Cys1189 and Cys1209 are oxidised to a cystine. N-linked (GlcNAc...) asparagine glycosylation is found at Asn1191 and Asn1205. An intramembrane region (pore-forming) is located at residues 1231 to 1252 (GLGYLSLLQVATFKGWMDIMYA). Residues 1253–1269 (AVDSREKEEQPQYEVNL) lie on the Extracellular side of the membrane. A helical membrane pass occupies residues 1270–1291 (YMYLYFVIFIIFGSFFTLNLFI). Residues 1292-1354 (GVIIDNFNQQ…MVYDLVTKQA (63 aa)) are Cytoplasmic-facing. The tract at residues 1310–1312 (IFM) is important for rapid channel inactivation. An IV repeat occupies 1335–1633 (IPRPQNKIQG…WEKFDPDATQ (299 aa)). The helical transmembrane segment at 1355-1372 (FDITIMILICLNMVTMMV) threads the bilayer. Residues 1373–1383 (ETDNQSQLKVD) lie on the Extracellular side of the membrane. Residues 1384 to 1402 (ILYNINMIFIIIFTGECVL) form a helical membrane-spanning segment. Over 1403–1414 (KMLALRQYYFTV) the chain is Cytoplasmic. A helical transmembrane segment spans residues 1415–1432 (GWNIFDFVVVILSIVGLA). Residues 1433-1445 (LSDLIQKYFVSPT) lie on the Extracellular side of the membrane. A helical membrane pass occupies residues 1446–1462 (LFRVIRLARIGRVLRLI). Residues 1463–1481 (RGAKGIRTLLFALMMSLPA) lie on the Cytoplasmic side of the membrane. Residues 1482–1499 (LFNIGLLLFLVMFIYSIF) traverse the membrane as a helical segment. The Extracellular portion of the chain corresponds to 1500–1521 (GMSNFAYVKKESGIDDMFNFET). An intramembrane region (pore-forming) is located at residues 1522–1544 (FGNSIICLFEITTSAGWDGLLNP). Residues 1545-1574 (ILNSGPPDCDPNLENPGTSVKGDCGNPSIG) lie on the Extracellular side of the membrane. Cys1553 and Cys1568 form a disulfide bridge. A helical transmembrane segment spans residues 1575–1597 (ICFFCSYIIISFLIVVNMYIAII). The Cytoplasmic segment spans residues 1598–1836 (LENFNVATEE…VRPGVKESLV (239 aa)). The IQ domain occupies 1727 to 1756 (EEVCAIKIQRAYRRHLLQRSMKQASYMYRH). The segment at 1778–1836 (KMYGHENGNSSSPSPEEKGEAGDAGPTMGLMPISPSDTAWPPAPPPGQTVRPGVKESLV) is disordered.

Belongs to the sodium channel (TC 1.A.1.10) family. Nav1.4/SCN4A subfamily. In terms of assembly, the Nav1.4 voltage-gated sodium channel consists of an ion-conducting alpha subunit SCN4A which is functional on its own and a regulatory beta subunit SCN1B. SCN1B strongly enhances the presence of SCN4A at the cell surface. SCN1B is also required for rapid channel inactivation and recovery after inactivation. It prevents the decrease of channel activity in response to repetitive, high-frequency depolarizations. Interacts with the syntrophins SNTA1, SNTB1 and SNTB2 (via PDZ domain); probably links SCN4A to the actin cytoskeleton and the extracellular matrix via the dystrophin-associated protein complex and regulates its localization in muscle cells. Interacts with TMEM233; probable regulator of the channel.

Its subcellular location is the cell membrane. It carries out the reaction Na(+)(in) = Na(+)(out). With respect to regulation, the channel is inhibited by tetrodotoxin and saxitoxin. Inhibited by the conotoxin GVIIJ. Functionally, pore-forming subunit of Nav1.4, a voltage-gated sodium (Nav) channel that directly mediates the depolarizing phase of action potentials in excitable membranes. Navs, also called VGSCs (voltage-gated sodium channels) or VDSCs (voltage-dependent sodium channels), operate by switching between closed and open conformations depending on the voltage difference across the membrane. In the open conformation they allow Na(+) ions to selectively pass through the pore, along their electrochemical gradient. The influx of Na+ ions provokes membrane depolarization, initiating the propagation of electrical signals throughout cells and tissues. Highly expressed in skeletal muscles, Nav1.4 generates the action potential crucial for muscle contraction. The protein is Sodium channel protein type 4 subunit alpha of Homo sapiens (Human).